The sequence spans 261 residues: Cytochrome c oxidase subunit 3 (261 aa).

The Mitochondrial matrix portion of the chain corresponds to 1 to 15 (MTHQTHAYHMVNPSP). A helical transmembrane segment spans residues 16–34 (WPLTGALSALLMTSGLIMW). Residues 35-40 (FHFNSV) are Mitochondrial intermembrane-facing. A helical membrane pass occupies residues 41-66 (ALLMLGLTTNMLTMYQWWRDVIREST). Residues 67–72 (FQGHHT) are Mitochondrial matrix-facing. The helical transmembrane segment at 73-105 (PNVQKGLRYGMILFIISEVLFFTGFFWAFYHSS) threads the bilayer. Residues 106–128 (LAPTPELGGCWPPTGIHPLNPLE) are Mitochondrial intermembrane-facing. Residues 129–152 (VPLLNTSVLLASGVSITWAHHSLM) form a helical membrane-spanning segment. The Mitochondrial matrix portion of the chain corresponds to 153-155 (EGN). A helical membrane pass occupies residues 156-183 (RNHMLQALFITIALGVYFTLLQASEYYE). Topologically, residues 184-190 (APFTISD) are mitochondrial intermembrane. Residues 191-223 (GVYGSTFFVATGFHGLHVIIGSTFLIVCFFRQL) form a helical membrane-spanning segment. Over 224–232 (KFHFTSSHH) the chain is Mitochondrial matrix. Residues 233–256 (FGFEAAAWYWHFVDVVWLFLYVSI) traverse the membrane as a helical segment. Residues 257-261 (YWWGS) are Mitochondrial intermembrane-facing.

This sequence belongs to the cytochrome c oxidase subunit 3 family. In terms of assembly, component of the cytochrome c oxidase (complex IV, CIV), a multisubunit enzyme composed of 14 subunits. The complex is composed of a catalytic core of 3 subunits MT-CO1, MT-CO2 and MT-CO3, encoded in the mitochondrial DNA, and 11 supernumerary subunits COX4I, COX5A, COX5B, COX6A, COX6B, COX6C, COX7A, COX7B, COX7C, COX8 and NDUFA4, which are encoded in the nuclear genome. The complex exists as a monomer or a dimer and forms supercomplexes (SCs) in the inner mitochondrial membrane with NADH-ubiquinone oxidoreductase (complex I, CI) and ubiquinol-cytochrome c oxidoreductase (cytochrome b-c1 complex, complex III, CIII), resulting in different assemblies (supercomplex SCI(1)III(2)IV(1) and megacomplex MCI(2)III(2)IV(2)).

The protein resides in the mitochondrion inner membrane. It catalyses the reaction 4 Fe(II)-[cytochrome c] + O2 + 8 H(+)(in) = 4 Fe(III)-[cytochrome c] + 2 H2O + 4 H(+)(out). Functionally, component of the cytochrome c oxidase, the last enzyme in the mitochondrial electron transport chain which drives oxidative phosphorylation. The respiratory chain contains 3 multisubunit complexes succinate dehydrogenase (complex II, CII), ubiquinol-cytochrome c oxidoreductase (cytochrome b-c1 complex, complex III, CIII) and cytochrome c oxidase (complex IV, CIV), that cooperate to transfer electrons derived from NADH and succinate to molecular oxygen, creating an electrochemical gradient over the inner membrane that drives transmembrane transport and the ATP synthase. Cytochrome c oxidase is the component of the respiratory chain that catalyzes the reduction of oxygen to water. Electrons originating from reduced cytochrome c in the intermembrane space (IMS) are transferred via the dinuclear copper A center (CU(A)) of subunit 2 and heme A of subunit 1 to the active site in subunit 1, a binuclear center (BNC) formed by heme A3 and copper B (CU(B)). The BNC reduces molecular oxygen to 2 water molecules using 4 electrons from cytochrome c in the IMS and 4 protons from the mitochondrial matrix. This chain is Cytochrome c oxidase subunit 3 (MT-CO3), found in Nanger granti (Grant's gazelle).